A 274-amino-acid chain; its full sequence is NADH-ubiquinone oxidoreductase chain 2 (274 aa).

Helical transmembrane passes span 28 to 48 (MIIM…FWFP), 54 to 74 (LTWM…LMLI), 79 to 99 (IKYL…IGGL), 107 to 127 (LMAF…MFSE), 128 to 148 (SIWL…TFMF), 171 to 191 (FTLF…GFLP), 206 to 226 (FLLT…LRIC), and 254 to 274 (LIMT…YFMF).

This sequence belongs to the complex I subunit 2 family.

It localises to the mitochondrion inner membrane. It catalyses the reaction a ubiquinone + NADH + 5 H(+)(in) = a ubiquinol + NAD(+) + 4 H(+)(out). Its function is as follows. Core subunit of the mitochondrial membrane respiratory chain NADH dehydrogenase (Complex I) that is believed to belong to the minimal assembly required for catalysis. Complex I functions in the transfer of electrons from NADH to the respiratory chain. The immediate electron acceptor for the enzyme is believed to be ubiquinone. This chain is NADH-ubiquinone oxidoreductase chain 2 (mt:ND2), found in Drosophila sechellia (Fruit fly).